The chain runs to 127 residues: Large ribosomal subunit protein eL22x (127 aa).

Belongs to the eukaryotic ribosomal protein eL22 family.

This is Large ribosomal subunit protein eL22x (RPL22A) from Arabidopsis thaliana (Mouse-ear cress).